The primary structure comprises 201 residues: Large ribosomal subunit protein uL4 (201 aa).

Positions 43-66 are disordered; the sequence is TRAQKTRSEVSGGGKKPWRQKGTG.

It belongs to the universal ribosomal protein uL4 family. In terms of assembly, part of the 50S ribosomal subunit.

Its function is as follows. One of the primary rRNA binding proteins, this protein initially binds near the 5'-end of the 23S rRNA. It is important during the early stages of 50S assembly. It makes multiple contacts with different domains of the 23S rRNA in the assembled 50S subunit and ribosome. In terms of biological role, forms part of the polypeptide exit tunnel. The polypeptide is Large ribosomal subunit protein uL4 (Tolumonas auensis (strain DSM 9187 / NBRC 110442 / TA 4)).